We begin with the raw amino-acid sequence, 348 residues long: MDDNKSKALTAAVGQIEKQFGKGAIMRLGDNQAMDIEAISTGSLTIDIALGIGGLPCGRVVEIYGPESSGKTTLTLQVIAEAQKNGKTCAFVDAEHALDPVYAEKLGVNIDELLVSQPDTGEQALEICDMLVRSGAVDVVIVDSVAALTPKAEIEGDMGDSHVGLQARLMSQALRKLTANIKRSNTLCIFINQIRMKIGVMFGNPETTTGGNALKFYSSVRLDIRRIGAVKEGDEVVGNETRVKVVKNKVAPPFKQAEFMIRYGEGISKEAELIDLGVKQKLVDKAGAWYSYKGDRIGQGKANVMKYLKEHPETANEIETKIRQELLLSKTVKAEEALPQGEDDVLPE.

65 to 72 provides a ligand contact to ATP; the sequence is GPESSGKT.

The protein belongs to the RecA family.

It is found in the cytoplasm. Functionally, can catalyze the hydrolysis of ATP in the presence of single-stranded DNA, the ATP-dependent uptake of single-stranded DNA by duplex DNA, and the ATP-dependent hybridization of homologous single-stranded DNAs. It interacts with LexA causing its activation and leading to its autocatalytic cleavage. The chain is Protein RecA from Alteromonas mediterranea (strain DSM 17117 / CIP 110805 / LMG 28347 / Deep ecotype).